The primary structure comprises 128 residues: MANGHRSQIKRERNAVKDTRPSAKLSYARVSVQKACFVLDAIRGKSLDEALAIVMYNPRYASSIIEKLLKSAAANAENNNGMDPSKLYVEECYANKGPTMKRVHPRAQGRAYRIEKRMSHITVVLNER.

The disordered stretch occupies residues 1–20; sequence MANGHRSQIKRERNAVKDTR. A compositionally biased stretch (basic and acidic residues) spans 9-20; the sequence is IKRERNAVKDTR.

The protein belongs to the universal ribosomal protein uL22 family. Part of the 50S ribosomal subunit.

Its function is as follows. This protein binds specifically to 23S rRNA; its binding is stimulated by other ribosomal proteins, e.g. L4, L17, and L20. It is important during the early stages of 50S assembly. It makes multiple contacts with different domains of the 23S rRNA in the assembled 50S subunit and ribosome. Functionally, the globular domain of the protein is located near the polypeptide exit tunnel on the outside of the subunit, while an extended beta-hairpin is found that lines the wall of the exit tunnel in the center of the 70S ribosome. The protein is Large ribosomal subunit protein uL22 of Lachnospira eligens (strain ATCC 27750 / DSM 3376 / VPI C15-48 / C15-B4) (Eubacterium eligens).